The chain runs to 380 residues: MEWEEESEAARQKAAAASASVVPAPFLTKTYQLVDDPATDHVVSWEDDDGGESASSFVVWRPPEFARDILPNYFKHSNFSSFVRQLNTYGFRKVVPERWEFANEFFRKGEKQLLCEIHRRKSAAATWPPFPPPPPPFFAPRHFAAGAFFRHGDGMLHGRLGALVTTTERRHWFESAALPVAPSSRLLSQLGPVIAPARRAAATPEEEALMQENHRLLRGNAALVQELAHMRKLYSDIIYFVQNHVRPVAPSPAAAAALHGLGVLRPPPAGGKAPASEVRGASGRSATSSSSLTVAEDQPTLLALRLPRTTEKIINEVSGGNGGGSTKLFGVHLSSADEQTSSGASRKRSPPQEQPPTSPAPKRTLVVEHSELRLSIVSPP.

Residues 216–245 (LLRGNAALVQELAHMRKLYSDIIYFVQNHV) form a hydrophobic repeat HR-A/B region. Disordered stretches follow at residues 268 to 296 (PAGGKAPASEVRGASGRSATSSSSLTVAE) and 314 to 380 (INEV…VSPP). Residues 278–296 (VRGASGRSATSSSSLTVAE) show a composition bias toward low complexity. Residues 346–348 (RKR) carry the Nuclear localization signal motif.

Belongs to the HSF family. Class B subfamily. As to quaternary structure, homotrimer. Post-translationally, exhibits temperature-dependent phosphorylation.

The protein resides in the nucleus. Functionally, transcriptional regulator that specifically binds DNA of heat shock promoter elements (HSE). The sequence is that of Putative heat stress transcription factor B-4a (HSFB4A) from Oryza sativa subsp. japonica (Rice).